Reading from the N-terminus, the 288-residue chain is Bis(5'-nucleosyl)-tetraphosphatase, symmetrical (288 aa).

It belongs to the Ap4A hydrolase family.

The catalysed reaction is P(1),P(4)-bis(5'-adenosyl) tetraphosphate + H2O = 2 ADP + 2 H(+). Its function is as follows. Hydrolyzes diadenosine 5',5'''-P1,P4-tetraphosphate to yield ADP. This chain is Bis(5'-nucleosyl)-tetraphosphatase, symmetrical, found in Pseudomonas putida (strain W619).